Consider the following 58-residue polypeptide: Ribulose bisphosphate carboxylase large chain (58 aa).

Residues 1–2 (MS) constitute a propeptide that is removed on maturation. Pro3 bears the N-acetylproline mark. Lys14 is subject to N6,N6,N6-trimethyllysine.

This sequence belongs to the RuBisCO large chain family. Type I subfamily. Heterohexadecamer of 8 large chains and 8 small chains.

It is found in the plastid. Its subcellular location is the chloroplast. It carries out the reaction 2 (2R)-3-phosphoglycerate + 2 H(+) = D-ribulose 1,5-bisphosphate + CO2 + H2O. The enzyme catalyses D-ribulose 1,5-bisphosphate + O2 = 2-phosphoglycolate + (2R)-3-phosphoglycerate + 2 H(+). In terms of biological role, ruBisCO catalyzes two reactions: the carboxylation of D-ribulose 1,5-bisphosphate, the primary event in carbon dioxide fixation, as well as the oxidative fragmentation of the pentose substrate in the photorespiration process. Both reactions occur simultaneously and in competition at the same active site. The polypeptide is Ribulose bisphosphate carboxylase large chain (rbcL) (Weinmannia silvicola (Towai)).